A 221-amino-acid chain; its full sequence is UPF0758 protein PC1_4100 (221 aa).

An MPN domain is found at 99-221 (AMLNPQATGQ…YVSFAERGWI (123 aa)). Residues histidine 170, histidine 172, and aspartate 183 each contribute to the Zn(2+) site. Positions 170–183 (HNHPSGKAEPSQAD) match the JAMM motif motif.

Belongs to the UPF0758 family. YicR subfamily.

The protein is UPF0758 protein PC1_4100 of Pectobacterium carotovorum subsp. carotovorum (strain PC1).